We begin with the raw amino-acid sequence, 830 residues long: Periplasmic nitrate reductase (830 aa).

Residues 1–30 (MTTRREFIKRSAAVTAACTAGISLSGEASN) constitute a signal peptide (tat-type signal). In terms of domain architecture, 4Fe-4S Mo/W bis-MGD-type spans 40-96 (LKWSKAPCRFCGTGCSVNVAVKDNQVVATHGDIQSEVNRGLNCVKGYFLSKIMYGKD). 4 residues coordinate [4Fe-4S] cluster: C47, C50, C54, and C82. Mo-bis(molybdopterin guanine dinucleotide) contacts are provided by residues K84, Q151, N176, C180, 213–220 (WGSNMAEM), 244–248 (STFQH), M374, Q378, N484, 510–511 (SE), K533, D560, and 720–729 (TGRVLEHWHS). W796 lines the substrate pocket. Residues N804 and K821 each coordinate Mo-bis(molybdopterin guanine dinucleotide).

The protein belongs to the prokaryotic molybdopterin-containing oxidoreductase family. NasA/NapA/NarB subfamily. In terms of assembly, component of the periplasmic nitrate reductase NapAB complex composed of NapA and NapB. [4Fe-4S] cluster is required as a cofactor. The cofactor is Mo-bis(molybdopterin guanine dinucleotide). Post-translationally, predicted to be exported by the Tat system. The position of the signal peptide cleavage has not been experimentally proven.

The protein resides in the periplasm. The enzyme catalyses 2 Fe(II)-[cytochrome] + nitrate + 2 H(+) = 2 Fe(III)-[cytochrome] + nitrite + H2O. Its function is as follows. Catalytic subunit of the periplasmic nitrate reductase complex NapAB. Receives electrons from NapB and catalyzes the reduction of nitrate to nitrite. The polypeptide is Periplasmic nitrate reductase (Hahella chejuensis (strain KCTC 2396)).